The following is a 151-amino-acid chain: Glutamate mutase sigma subunit 1 (151 aa).

Residues 7–140 (PRTVILGVIG…EMLREDLQLT (134 aa)) form the B12-binding domain. Residues 17–21 (SDAHV), H20, 65–67 (SSL), and 96–100 (NLAVG) contribute to the adenosylcob(III)alamin site.

It belongs to the methylaspartate mutase GlmS subunit family. In terms of assembly, heterotetramer composed of 2 epsilon subunits (GlmE) and 2 sigma subunits (GlmS). GlmE exists as a homodimer and GlmS as a monomer. It depends on adenosylcob(III)alamin as a cofactor.

It catalyses the reaction (2S,3S)-3-methyl-L-aspartate = L-glutamate. It functions in the pathway amino-acid degradation; L-glutamate degradation via mesaconate pathway; acetate and pyruvate from L-glutamate: step 1/4. Functionally, catalyzes the carbon skeleton rearrangement of L-glutamate to L-threo-3-methylaspartate ((2S,3S)-3-methylaspartate). This is Glutamate mutase sigma subunit 1 from Haloarcula marismortui (strain ATCC 43049 / DSM 3752 / JCM 8966 / VKM B-1809) (Halobacterium marismortui).